The sequence spans 198 residues: Imidazoleglycerol-phosphate dehydratase (198 aa).

Belongs to the imidazoleglycerol-phosphate dehydratase family.

The protein resides in the cytoplasm. The enzyme catalyses D-erythro-1-(imidazol-4-yl)glycerol 3-phosphate = 3-(imidazol-4-yl)-2-oxopropyl phosphate + H2O. It functions in the pathway amino-acid biosynthesis; L-histidine biosynthesis; L-histidine from 5-phospho-alpha-D-ribose 1-diphosphate: step 6/9. This is Imidazoleglycerol-phosphate dehydratase from Gluconobacter oxydans (strain 621H) (Gluconobacter suboxydans).